The primary structure comprises 231 residues: 2-C-methyl-D-erythritol 4-phosphate cytidylyltransferase (231 aa).

The protein belongs to the IspD/TarI cytidylyltransferase family. IspD subfamily.

The catalysed reaction is 2-C-methyl-D-erythritol 4-phosphate + CTP + H(+) = 4-CDP-2-C-methyl-D-erythritol + diphosphate. The protein operates within isoprenoid biosynthesis; isopentenyl diphosphate biosynthesis via DXP pathway; isopentenyl diphosphate from 1-deoxy-D-xylulose 5-phosphate: step 2/6. In terms of biological role, catalyzes the formation of 4-diphosphocytidyl-2-C-methyl-D-erythritol from CTP and 2-C-methyl-D-erythritol 4-phosphate (MEP). This chain is 2-C-methyl-D-erythritol 4-phosphate cytidylyltransferase, found in Xylella fastidiosa (strain 9a5c).